Here is a 303-residue protein sequence, read N- to C-terminus: Succinate--CoA ligase [ADP-forming] subunit alpha (303 aa).

CoA-binding positions include 20-23 (TGSE), K46, and 108-110 (ITE). A substrate-binding site is contributed by Y173. H259 functions as the Tele-phosphohistidine intermediate in the catalytic mechanism.

This sequence belongs to the succinate/malate CoA ligase alpha subunit family. Heterotetramer of two alpha and two beta subunits.

It carries out the reaction succinate + ATP + CoA = succinyl-CoA + ADP + phosphate. The catalysed reaction is GTP + succinate + CoA = succinyl-CoA + GDP + phosphate. The protein operates within carbohydrate metabolism; tricarboxylic acid cycle; succinate from succinyl-CoA (ligase route): step 1/1. In terms of biological role, succinyl-CoA synthetase functions in the citric acid cycle (TCA), coupling the hydrolysis of succinyl-CoA to the synthesis of either ATP or GTP and thus represents the only step of substrate-level phosphorylation in the TCA. The alpha subunit of the enzyme binds the substrates coenzyme A and phosphate, while succinate binding and nucleotide specificity is provided by the beta subunit. In Mycobacterium bovis (strain ATCC BAA-935 / AF2122/97), this protein is Succinate--CoA ligase [ADP-forming] subunit alpha.